The following is a 476-amino-acid chain: MRQSSENSQNLYLYNTATRTKELFSASNAPVKLYTCGPTVYDYAHIGNFRTYVFEDLLKRTLLFFGYSVKHIMNITDVDDKTLAGACRKNISLEEYTAPFIQAFFEDIAELNILPADVYPHATHYIPQMIKAIQKLLDENIAYIGQDSSVYFSIKKFPTYGKLSQLKLQDLQCCSRVTSDEYDKENLSDFVLWKAYDEQRDGHIYWESPFGKGRPGWHLECSIMAMELLGSSIDIHAGGVDNIFPHHENEIAQSESLSHKPFSRYWLHSEHLLVDGKKMSKSLGNFFTLRNLLDRGFSGEEIRYLLLQSHYRMQLNFTEEGLLACRQALKRLRDFISRLENPYPESTTISDEIDQQGKTFLKAFSDSIANDLNIAAALAALFDFIHQTNSFIDKSKFTQADANYILDLLKKINTVLGILQFSATQEIPDEVMQLVEKREVARREKNWAQADAFRDQVASLGYLIEDSKSGPKVKKL.

C36 contacts Zn(2+). Residues P38–N48 carry the 'HIGH' region motif. Zn(2+) is bound by residues C221, H246, and E250. The 'KMSKS' region signature appears at K278–S282. K281 provides a ligand contact to ATP.

It belongs to the class-I aminoacyl-tRNA synthetase family. As to quaternary structure, monomer. Zn(2+) is required as a cofactor.

It localises to the cytoplasm. The enzyme catalyses tRNA(Cys) + L-cysteine + ATP = L-cysteinyl-tRNA(Cys) + AMP + diphosphate. The polypeptide is Cysteine--tRNA ligase (Chlamydia felis (strain Fe/C-56) (Chlamydophila felis)).